The following is an 867-amino-acid chain: Protein translocase subunit SecA (867 aa).

Residues Gln85, 103 to 107 (GEGKT), and Asp491 contribute to the ATP site.

Belongs to the SecA family. In terms of assembly, monomer and homodimer. Part of the essential Sec protein translocation apparatus which comprises SecA, SecYEG and auxiliary proteins SecDF. Other proteins may also be involved.

The protein resides in the cell membrane. It is found in the cytoplasm. The enzyme catalyses ATP + H2O + cellular proteinSide 1 = ADP + phosphate + cellular proteinSide 2.. In terms of biological role, part of the Sec protein translocase complex. Interacts with the SecYEG preprotein conducting channel. Has a central role in coupling the hydrolysis of ATP to the transfer of proteins into and across the cell membrane, serving as an ATP-driven molecular motor driving the stepwise translocation of polypeptide chains across the membrane. This is Protein translocase subunit SecA from Mycoplasmopsis pulmonis (strain UAB CTIP) (Mycoplasma pulmonis).